Reading from the N-terminus, the 403-residue chain is Aurora kinase A (403 aa).

A disordered region spans residues 1–125 (MDRSKENCIS…SKQKNEESKK (125 aa)). Polar residues-rich tracts occupy residues 27–83 (VTQQ…QATS) and 91–101 (PLNNTQKSKQP). 2 positions are modified to phosphoserine: S41 and S51. Positions 114–125 (LASKQKNEESKK) are enriched in basic and acidic residues. Residues 133-383 (FEIGRPLGKG…LREVLEHPWI (251 aa)) form the Protein kinase domain. ATP contacts are provided by residues K143, K162, and 211–213 (EYA). D256 serves as the catalytic Proton acceptor. K258 is covalently cross-linked (Glycyl lysine isopeptide (Lys-Gly) (interchain with G-Cter in SUMO2)). ATP contacts are provided by residues 260-261 (EN) and D274. An activation segment region spans residues 280-293 (HAPSSRRTTLCGTL). Phosphothreonine is present on residues T287 and T288. S342 carries the post-translational modification Phosphoserine; by PKA and PAK.

This sequence belongs to the protein kinase superfamily. Ser/Thr protein kinase family. Aurora subfamily. In terms of assembly, part of a complex composed of NEDD9, AURKA and CTTN; within the complex NEDD9 acts as a scaffold protein and is required for complex formation. Identified in a complex with AUNIP and NIN. Interacts with FBXL7. Interacts with CPEB1, JTB, TACC1, TPX2, PPP2CA, as well as with the protein phosphatase type 1 (PP1) isoforms PPP1CA, PPP1CB and PPP1CC. Also interacts with its substrates ARHGEF2, BORA, KIF2A, PARD3, and p53/TP53. Interaction with BORA promotes phosphorylation of PLK1. Interacts with CIMAP3. Interacts with GADD45A, competing with its oligomerization. Interacts (via C-terminus) with AUNIP (via C-terminus). Interacts with FRY; this interaction facilitates AURKA-mediated PLK1 phosphorylation. Interacts with SIRT2. Interacts with MYCN; interaction is phospho-independent and triggers AURKA activation; AURKA competes with FBXW7 for binding to unphosphorylated MYCN but not for binding to phosphorylated MYCN. Interacts with HNRNPU. Interacts with AAAS. Interacts with KLHL18 and CUL3. Interacts with FOXP1. Interacts with HDAC6; AURKA-mediated phosphorylation of HDAC6 promotes deacetylation of alpha-tubulin. Activated by phosphorylation at Thr-288; this brings about a change in the conformation of the activation segment. Phosphorylation at Thr-288 varies during the cell cycle and is highest during M phase. Autophosphorylated at Thr-288 upon TPX2 binding. Thr-288 can be phosphorylated by several kinases, including PAK and PKA. Protein phosphatase type 1 (PP1) binds AURKA and inhibits its activity by dephosphorylating Thr-288 during mitosis. Phosphorylation at Ser-342 decreases the kinase activity. PPP2CA controls degradation by dephosphorylating Ser-51 at the end of mitosis. In terms of processing, ubiquitinated by the E3 ubiquitin-protein ligase complex SCF(FBXL7) during mitosis, leading to its degradation by the proteasome. Ubiquitinated by CHFR, leading to its degradation by the proteasome. Ubiquitinated by the anaphase-promoting complex (APC), leading to its degradation by the proteasome. Ubiquitinated by the CUL3-KLHL18 ligase leading to its activation at the centrosome which is required for initiating mitotic entry. Ubiquitination mediated by CUL3-KLHL18 ligase does not lead to its degradation by the proteasome. Highly expressed in testis and weakly in skeletal muscle, thymus and spleen. Also highly expressed in colon, ovarian, prostate, neuroblastoma, breast and cervical cancer cell lines.

The protein localises to the cytoplasm. It is found in the cytoskeleton. Its subcellular location is the microtubule organizing center. It localises to the centrosome. The protein resides in the spindle pole. The protein localises to the centriole. It is found in the cell projection. Its subcellular location is the neuron projection. It localises to the cilium. The protein resides in the cilium basal body. The protein localises to the basolateral cell membrane. It carries out the reaction L-seryl-[protein] + ATP = O-phospho-L-seryl-[protein] + ADP + H(+). The catalysed reaction is L-threonyl-[protein] + ATP = O-phospho-L-threonyl-[protein] + ADP + H(+). Its activity is regulated as follows. Activation of CDK1, appears to be an upstream event of AURKA activation. Phosphatase inhibitor-2 (PPP1R2) and TPX2 act also as activators. Inactivated by the G2 checkpoint. Inhibited by GADD45A and p53/TP53, and through dephosphorylation by protein phosphatase type 1 (PP1). MLN8054 is also a potent and selective inhibitor. Activated during the early phase of cilia disassembly in the presence of CIMAP3. Inhibited by the small molecule inhibitor VX-680. Its function is as follows. Mitotic serine/threonine kinase that contributes to the regulation of cell cycle progression. Associates with the centrosome and the spindle microtubules during mitosis and plays a critical role in various mitotic events including the establishment of mitotic spindle, centrosome duplication, centrosome separation as well as maturation, chromosomal alignment, spindle assembly checkpoint, and cytokinesis. Required for normal spindle positioning during mitosis and for the localization of NUMA1 and DCTN1 to the cell cortex during metaphase. Required for initial activation of CDK1 at centrosomes. Phosphorylates numerous target proteins, including ARHGEF2, BORA, BRCA1, CDC25B, DLGP5, HDAC6, KIF2A, LATS2, NDEL1, PARD3, PPP1R2, PLK1, RASSF1, TACC3, p53/TP53 and TPX2. Phosphorylates MCRS1 which is required for MCRS1-mediated kinetochore fiber assembly and mitotic progression. Regulates KIF2A tubulin depolymerase activity. Important for microtubule formation and/or stabilization. Required for normal axon formation. Plays a role in microtubule remodeling during neurite extension. Also acts as a key regulatory component of the p53/TP53 pathway, and particularly the checkpoint-response pathways critical for oncogenic transformation of cells, by phosphorylating and destabilizing p53/TP53. Phosphorylates its own inhibitors, the protein phosphatase type 1 (PP1) isoforms, to inhibit their activity. Inhibits cilia outgrowth. Required for cilia disassembly via phosphorylation of HDAC6 and subsequent deacetylation of alpha-tubulin. Regulates protein levels of the anti-apoptosis protein BIRC5 by suppressing the expression of the SCF(FBXL7) E3 ubiquitin-protein ligase substrate adapter FBXL7 through the phosphorylation of the transcription factor FOXP1. This Homo sapiens (Human) protein is Aurora kinase A.